The following is a 383-amino-acid chain: Succinyl-diaminopimelate desuccinylase (383 aa).

His-79 is a Zn(2+) binding site. Residue Asp-81 is part of the active site. Asp-110 contributes to the Zn(2+) binding site. The active-site Proton acceptor is the Glu-141. Glu-142, Glu-170, and His-355 together coordinate Zn(2+).

It belongs to the peptidase M20A family. DapE subfamily. As to quaternary structure, homodimer. Zn(2+) serves as cofactor. Co(2+) is required as a cofactor.

It carries out the reaction N-succinyl-(2S,6S)-2,6-diaminopimelate + H2O = (2S,6S)-2,6-diaminopimelate + succinate. The protein operates within amino-acid biosynthesis; L-lysine biosynthesis via DAP pathway; LL-2,6-diaminopimelate from (S)-tetrahydrodipicolinate (succinylase route): step 3/3. In terms of biological role, catalyzes the hydrolysis of N-succinyl-L,L-diaminopimelic acid (SDAP), forming succinate and LL-2,6-diaminopimelate (DAP), an intermediate involved in the bacterial biosynthesis of lysine and meso-diaminopimelic acid, an essential component of bacterial cell walls. This chain is Succinyl-diaminopimelate desuccinylase, found in Helicobacter pylori (strain Shi470).